The following is a 148-amino-acid chain: Cdc42 effector protein 5 (148 aa).

2 disordered regions span residues 1–89 (MPVL…DPLL) and 111–148 (RPEA…VIGL). The CRIB domain occupies 23–37 (ISAPLGDFRHTLHVG). Arg38 is subject to Omega-N-methylarginine. Residues 55 to 76 (GPPPEPRAPPAGAPRSPPPPAV) are compositionally biased toward pro residues. Low complexity predominate over residues 77–87 (PQSAAPSPADP).

Belongs to the BORG/CEP family. Interacts with CDC42, in a GTP-dependent manner, and with SEPT7.

It is found in the endomembrane system. Its subcellular location is the cytoplasm. The protein localises to the cytoskeleton. Its function is as follows. Probably involved in the organization of the actin cytoskeleton. May act downstream of CDC42 to induce actin filament assembly leading to cell shape changes. Induces pseudopodia formation in fibroblasts. Inhibits MAPK8 independently of CDC42 binding. Controls septin organization and this effect is negatively regulated by CDC42. The chain is Cdc42 effector protein 5 (CDC42EP5) from Homo sapiens (Human).